A 176-amino-acid chain; its full sequence is MNLPGPIHDFLLVFLGLGLILGGLGVVLLTNPIFSAFSLGLVLVCISLFYILSNSHFVAAAQLLIYVGAINVLILFAVMFMNGSEYYKDFNLWTVGNGLTSLICTSLFVLLITIISNTTWYGIIWTTRANQIIEQDLVSNGQQIGIHLSTDFFLPFEFISIILLVALIGAIATARQ.

5 consecutive transmembrane segments (helical) span residues 10–30 (FLLV…VLLT), 32–52 (PIFS…FYIL), 61–81 (AQLL…VMFM), 95–115 (VGNG…ITII), and 152–172 (FFLP…GAIA).

This sequence belongs to the complex I subunit 6 family. In terms of assembly, NDH is composed of at least 16 different subunits, 5 of which are encoded in the nucleus.

It localises to the plastid. Its subcellular location is the chloroplast thylakoid membrane. The enzyme catalyses a plastoquinone + NADH + (n+1) H(+)(in) = a plastoquinol + NAD(+) + n H(+)(out). It carries out the reaction a plastoquinone + NADPH + (n+1) H(+)(in) = a plastoquinol + NADP(+) + n H(+)(out). NDH shuttles electrons from NAD(P)H:plastoquinone, via FMN and iron-sulfur (Fe-S) centers, to quinones in the photosynthetic chain and possibly in a chloroplast respiratory chain. The immediate electron acceptor for the enzyme in this species is believed to be plastoquinone. Couples the redox reaction to proton translocation, and thus conserves the redox energy in a proton gradient. In Populus alba (White poplar), this protein is NAD(P)H-quinone oxidoreductase subunit 6, chloroplastic (ndhG).